Here is a 91-residue protein sequence, read N- to C-terminus: Uteroglobin (91 aa).

A signal peptide spans 1–21 (MKLTIAIVLVTLTLFCRPAST).

This sequence belongs to the secretoglobin family. Antiparallel homodimer; disulfide-linked. Interaction with LMBR1L is controversial.

The protein resides in the secreted. Functionally, binds phosphatidylcholine, phosphatidylinositol, polychlorinated biphenyls (PCB) and weakly progesterone, potent inhibitor of phospholipase A2. The polypeptide is Uteroglobin (SCGB1A1) (Bos taurus (Bovine)).